A 128-amino-acid polypeptide reads, in one-letter code: MEVLNAIGRRKTSVARVYLQSGKGSIVVNGLDFKTYFKTEPLQISVESPLNLVAEAGKYDINVNVQGGGVTGQAEAIRLGIARALVLVNSEFKSPLRKEGLMTRDSRMVERKKYGKRKARKRFQFSKR.

It belongs to the universal ribosomal protein uS9 family.

The polypeptide is Small ribosomal subunit protein uS9 (Cytophaga hutchinsonii (strain ATCC 33406 / DSM 1761 / CIP 103989 / NBRC 15051 / NCIMB 9469 / D465)).